Consider the following 181-residue polypeptide: Adenine phosphoribosyltransferase (181 aa).

It belongs to the purine/pyrimidine phosphoribosyltransferase family. As to quaternary structure, homodimer.

The protein resides in the cytoplasm. It carries out the reaction AMP + diphosphate = 5-phospho-alpha-D-ribose 1-diphosphate + adenine. Its pathway is purine metabolism; AMP biosynthesis via salvage pathway; AMP from adenine: step 1/1. Catalyzes a salvage reaction resulting in the formation of AMP, that is energically less costly than de novo synthesis. The polypeptide is Adenine phosphoribosyltransferase (Rhodopseudomonas palustris (strain HaA2)).